The chain runs to 136 residues: ATP synthase epsilon chain (136 aa).

This sequence belongs to the ATPase epsilon chain family. F-type ATPases have 2 components, CF(1) - the catalytic core - and CF(0) - the membrane proton channel. CF(1) has five subunits: alpha(3), beta(3), gamma(1), delta(1), epsilon(1). CF(0) has three main subunits: a, b and c.

Its subcellular location is the cell membrane. In terms of biological role, produces ATP from ADP in the presence of a proton gradient across the membrane. This Herpetosiphon aurantiacus (strain ATCC 23779 / DSM 785 / 114-95) protein is ATP synthase epsilon chain.